A 664-amino-acid chain; its full sequence is Macoilin (664 aa).

The next 4 membrane-spanning stretches (helical) occupy residues 28 to 48 (TFLYLKFLVVWALVLLADFVL), 75 to 95 (AFSVFFVCVAFTSNIICLLFI), 120 to 140 (VCLPTVSLWILFVYIEAAIRF), and 154 to 174 (FAAHCIGYPVVTLGFGFKSYV). The segment covering 253–265 (REKGKEKDKDAKK) has biased composition (basic and acidic residues). The segment at 253–274 (REKGKEKDKDAKKHNLGINNNN) is disordered. Serine 305 is subject to Phosphoserine. Residues 320–348 (KNYKNASGVVNSSPRSHSATNGSIPSSSS) show a composition bias toward polar residues. A disordered region spans residues 320–375 (KNYKNASGVVNSSPRSHSATNGSIPSSSSKNEKKQKCTSKGPSAHKDLMENCIPNN). An N-linked (GlcNAc...) asparagine glycan is attached at asparagine 324. Position 332 is a phosphoserine (serine 332). Asparagine 340 and asparagine 452 each carry an N-linked (GlcNAc...) asparagine glycan. The tract at residues 630–664 (TSPLSPVSPHYSSKFVETSPSGLDPNASVYQPLKK) is disordered. Serine 631 and serine 634 each carry phosphoserine. Asparagine 655 carries an N-linked (GlcNAc...) asparagine glycan.

The protein belongs to the macoilin family. As to expression, strong expression in whole nervous system up to 12.5 dpc. Highly expressed in all neuronal differentiation fields from 14.5 dpc to birth, with highest expression in the telencephalic cortical plate and mitral cells in the olfactory bulb, and lower expression in neuronal progenitor zones. Progressively decreased expression in fields of neuron precursor proliferation from 14.5 dpc and virtually undetectable there by 17.5 dpc. No significant expression detected outside the nervous system. After birth, significant expression remains in the cerebellum, olfactory bulb and hippocampus.

Its subcellular location is the rough endoplasmic reticulum membrane. The protein localises to the nucleus membrane. In terms of biological role, plays a role in the regulation of neuronal activity. The polypeptide is Macoilin (Maco1) (Mus musculus (Mouse)).